Reading from the N-terminus, the 241-residue chain is 2-C-methyl-D-erythritol 4-phosphate cytidylyltransferase (241 aa).

The protein belongs to the IspD/TarI cytidylyltransferase family. IspD subfamily.

It catalyses the reaction 2-C-methyl-D-erythritol 4-phosphate + CTP + H(+) = 4-CDP-2-C-methyl-D-erythritol + diphosphate. It functions in the pathway isoprenoid biosynthesis; isopentenyl diphosphate biosynthesis via DXP pathway; isopentenyl diphosphate from 1-deoxy-D-xylulose 5-phosphate: step 2/6. Functionally, catalyzes the formation of 4-diphosphocytidyl-2-C-methyl-D-erythritol from CTP and 2-C-methyl-D-erythritol 4-phosphate (MEP). In Mycobacterium leprae (strain Br4923), this protein is 2-C-methyl-D-erythritol 4-phosphate cytidylyltransferase.